A 437-amino-acid chain; its full sequence is Glutamate-1-semialdehyde 2,1-aminomutase (437 aa).

K273 carries the post-translational modification N6-(pyridoxal phosphate)lysine.

It belongs to the class-III pyridoxal-phosphate-dependent aminotransferase family. HemL subfamily. Homodimer. Pyridoxal 5'-phosphate serves as cofactor.

Its subcellular location is the cytoplasm. The enzyme catalyses (S)-4-amino-5-oxopentanoate = 5-aminolevulinate. Its pathway is porphyrin-containing compound metabolism; protoporphyrin-IX biosynthesis; 5-aminolevulinate from L-glutamyl-tRNA(Glu): step 2/2. The protein is Glutamate-1-semialdehyde 2,1-aminomutase of Chlamydia caviae (strain ATCC VR-813 / DSM 19441 / 03DC25 / GPIC) (Chlamydophila caviae).